The following is a 95-amino-acid chain: Small ribosomal subunit protein bS6 (95 aa).

The protein belongs to the bacterial ribosomal protein bS6 family.

Its function is as follows. Binds together with bS18 to 16S ribosomal RNA. The protein is Small ribosomal subunit protein bS6 of Corynebacterium diphtheriae (strain ATCC 700971 / NCTC 13129 / Biotype gravis).